The chain runs to 313 residues: Probable cell division protein WhiA (313 aa).

Positions 276-309 (SLKELGEMLHPKLGKSGVNHRLRKLDEIAERIRK) form a DNA-binding region, H-T-H motif.

The protein belongs to the WhiA family.

Involved in cell division and chromosome segregation. The chain is Probable cell division protein WhiA from Ruminiclostridium cellulolyticum (strain ATCC 35319 / DSM 5812 / JCM 6584 / H10) (Clostridium cellulolyticum).